The chain runs to 364 residues: tRNA/tmRNA (uracil-C(5))-methyltransferase (364 aa).

Residues Gln-188, Tyr-216, Asn-221, Glu-237, and Asp-297 each coordinate S-adenosyl-L-methionine. Catalysis depends on Cys-322, which acts as the Nucleophile. The active-site Proton acceptor is the Glu-356.

Belongs to the class I-like SAM-binding methyltransferase superfamily. RNA M5U methyltransferase family. TrmA subfamily.

It carries out the reaction uridine(54) in tRNA + S-adenosyl-L-methionine = 5-methyluridine(54) in tRNA + S-adenosyl-L-homocysteine + H(+). The enzyme catalyses uridine(341) in tmRNA + S-adenosyl-L-methionine = 5-methyluridine(341) in tmRNA + S-adenosyl-L-homocysteine + H(+). In terms of biological role, dual-specificity methyltransferase that catalyzes the formation of 5-methyluridine at position 54 (m5U54) in all tRNAs, and that of position 341 (m5U341) in tmRNA (transfer-mRNA). This is tRNA/tmRNA (uracil-C(5))-methyltransferase from Colwellia psychrerythraea (strain 34H / ATCC BAA-681) (Vibrio psychroerythus).